A 555-amino-acid chain; its full sequence is WRKY transcription factor WRKY24 (555 aa).

Disordered stretches follow at residues 38–65 and 132–248; these read GGGG…PSSF and QTAP…CTFP. The segment covering 51 to 61 has biased composition (pro residues); sequence PSLPLSPPPVS. Residues 163 to 194 are compositionally biased toward low complexity; the sequence is QQQQQPWGYQQQPAGMDAGANAASFGAAPFQA. The segment at residues 214-278 is a DNA-binding region (WRKY 1); it reads SQRRSSDDGY…YKGTHNHAKP (65 aa). The short motif at 253–259 is the Nuclear localization signal element; sequence KKKVERS. The segment at 270–367 is disordered; it reads KGTHNHAKPQ…EGISMAGNRT (98 aa). Composition is skewed to polar residues over residues 277 to 294 and 310 to 320; these read KPQN…QVLQ and TAATPENSSAS. The span at 347 to 356 shows a compositional bias: basic and acidic residues; that stretch reads DSKRWRKDGD. Residues 379-444 constitute a DNA-binding region (WRKY 2); that stretch reads SDIDILDDGY…YEGKHNHDVP (66 aa). Residues 466–555 form a transcription repression of gibberellic acid (GA)-induced promoters region; sequence HPYLPNQPPP…DDMFFQNSLY (90 aa). 2 disordered regions span residues 471–498 and 513–555; these read NQPP…GQGP and GFDD…NSLY.

Belongs to the WRKY group II-a family. Expressed in aleurone cells. Mostly expressed in aleurone layers and leaves, and, to a lower extent, in roots, panicles and embryos.

It localises to the nucleus. Transcription repressor. Interacts specifically with the W box (5'-(T)TGAC[CT]-3'), a frequently occurring elicitor-responsive cis-acting element. Negative regulator of both gibberellic acid (GA) and abscisic acid (ABA) signaling in aleurone cells, probably by interfering with GAM1, via the specific repression of GA- and ABA-induced promoters. This is WRKY transcription factor WRKY24 from Oryza sativa subsp. indica (Rice).